The sequence spans 139 residues: Transcription initiation factor IIA small chain homolog (139 aa).

Residues 113–139 (LSAQGPSKRVNRAHAAAAGDDEDDDSD) are disordered.

It belongs to the TFIIA subunit 2 family.

It localises to the nucleus. This is Transcription initiation factor IIA small chain homolog from Caenorhabditis elegans.